The following is a 159-amino-acid chain: MPSFDVVSELDKHEVTNAIDNAIKELDRRYDLRGKGSFEQKDLTVQLTAEAEFQLEQMLEILKLSLVKRKIDIQCLEVKDAYASGKTMKQEAVLREGIDKELAKKIVAHIKDAKLKVQAAIQGEQVRVTGKKRDDLQEAIALLRGHEFGMPLQFNNFRD.

The protein belongs to the YajQ family.

Functionally, nucleotide-binding protein. This chain is Nucleotide-binding protein PST_3153, found in Stutzerimonas stutzeri (strain A1501) (Pseudomonas stutzeri).